Consider the following 162-residue polypeptide: uncharacterized protein (162 aa).

The 73-residue stretch at 6–78 folds into the HTH asnC-type domain; it reads LDDLDRNILR…ALIVLEVGKP (73 aa). Positions 25–44 form a DNA-binding region, H-T-H motif; the sequence is ISELSEQLKKPESTIHFRIK.

This is an uncharacterized protein from Pyrococcus furiosus (strain ATCC 43587 / DSM 3638 / JCM 8422 / Vc1).